Reading from the N-terminus, the 560-residue chain is DNA ligase B (560 aa).

Lys-124 acts as the N6-AMP-lysine intermediate in catalysis.

It belongs to the NAD-dependent DNA ligase family. LigB subfamily.

It catalyses the reaction NAD(+) + (deoxyribonucleotide)n-3'-hydroxyl + 5'-phospho-(deoxyribonucleotide)m = (deoxyribonucleotide)n+m + AMP + beta-nicotinamide D-nucleotide.. Its function is as follows. Catalyzes the formation of phosphodiester linkages between 5'-phosphoryl and 3'-hydroxyl groups in double-stranded DNA using NAD as a coenzyme and as the energy source for the reaction. This is DNA ligase B from Escherichia coli O1:K1 / APEC.